Consider the following 301-residue polypeptide: UDP-N-acetylenolpyruvoylglucosamine reductase (301 aa).

The FAD-binding PCMH-type domain occupies 30–194 (VGGEADYLVF…LSVKFALAPG (165 aa)). Arginine 173 is an active-site residue. Catalysis depends on serine 223, which acts as the Proton donor. Glutamate 293 is an active-site residue.

It belongs to the MurB family. FAD serves as cofactor.

The protein resides in the cytoplasm. It carries out the reaction UDP-N-acetyl-alpha-D-muramate + NADP(+) = UDP-N-acetyl-3-O-(1-carboxyvinyl)-alpha-D-glucosamine + NADPH + H(+). The protein operates within cell wall biogenesis; peptidoglycan biosynthesis. In terms of biological role, cell wall formation. The protein is UDP-N-acetylenolpyruvoylglucosamine reductase of Streptococcus pneumoniae (strain 70585).